A 186-amino-acid chain; its full sequence is CRS2-like protein, chloroplastic (186 aa).

The transit peptide at 1–49 directs the protein to the chloroplast; it reads MAMTAASVFGSGGCLELLTSSKAMRGKLWTRLAPFISKRHASTSQTSLS. TRNA is bound at residue Y73. Residue H78 is the Proton acceptor of the active site. TRNA is bound by residues Y123, N125, and N171.

The protein belongs to the PTH family.

The protein resides in the plastid. The protein localises to the chloroplast. In Oryza sativa subsp. japonica (Rice), this protein is CRS2-like protein, chloroplastic.